The sequence spans 1143 residues: DNA polymerase III subunit alpha (1143 aa).

It belongs to the DNA polymerase type-C family. DnaE subfamily. In terms of assembly, DNA polymerase III contains a core (composed of alpha, epsilon and theta chains) that associates with a tau subunit. This core dimerizes to form the PolIII' complex. PolIII' associates with the gamma complex (composed of gamma, delta, delta', psi and chi chains) and with the beta chain to form the complete DNA polymerase III complex.

It localises to the cytoplasm. It catalyses the reaction DNA(n) + a 2'-deoxyribonucleoside 5'-triphosphate = DNA(n+1) + diphosphate. Its function is as follows. DNA polymerase III is a complex, multichain enzyme responsible for most of the replicative synthesis in bacteria. This DNA polymerase also exhibits 3' to 5' exonuclease activity. The alpha chain is the DNA polymerase. The chain is DNA polymerase III subunit alpha (dnaE1) from Caulobacter vibrioides (strain NA1000 / CB15N) (Caulobacter crescentus).